A 200-amino-acid polypeptide reads, in one-letter code: THO complex subunit tho5 (200 aa).

The protein belongs to the THOC5 family. In terms of assembly, component of the THO and TREX complexes.

The protein resides in the cytoplasm. It is found in the nucleus. Component the THO subcomplex of the TREX complex, which operates in coupling transcription elongation to mRNA export. The THO complex is recruited to transcribed genes and moves along the gene with the elongating polymerase during transcription. THO is important for stabilizing nascent RNA in the RNA polymerase II elongation complex by preventing formation of DNA:RNA hybrids behind the elongating polymerase. The THO complex is also required to maintain TRAMP complex occupancy at sites of snoRNA transcription thus promoting exosome-mediated degradation of snoRNA precursors. The polypeptide is THO complex subunit tho5 (Schizosaccharomyces pombe (strain 972 / ATCC 24843) (Fission yeast)).